The sequence spans 427 residues: MMSHIRLVLCSALLSMMSCPTSGTIGEMLSLAASSNSSICHGMQFTEPTESFMGILPNETLPMFIFSIMHSEAVPKVGKTLRISHDMKLFGGEAVNYMIFVNKILYEPISYYNYTGSCRQQGLSSCVRVYSDLVNGSKGNPSVKLGFTAIELNKTKNTDFHNLGFKICFSCRDHNGIRLVVYNKNNRTAQLMMCPSELIFSQDFTINSTSVNPSEEAAVPLLNVTGYTCIALHNKNMLTHHSPALSSGSKVDNTLEPGCDSNVGLFGHSTGTDYGWGLANFFSAGITNSLQISQLEHVTDAIACKIAKTSNYTTTALFLLNKEEGEIRDHVIEHEVALNYLLAHQGGLCSVVKGPMCCSDIDDFRRNVSDMIDKVHEEMKKFYHEPDPFGGLGTWGFYGTIFGHVLQWIPIIIMVVVVCFVCSWVRK.

The Extracellular segment spans residues 2–50; the sequence is MSHIRLVLCSALLSMMSCPTSGTIGEMLSLAASSNSSICHGMQFTEPTE. Asn-36 is a glycosylation site (N-linked (GlcNAc...) asparagine; by host). Residues 51-71 form a helical membrane-spanning segment; it reads SFMGILPNETLPMFIFSIMHS. The Cytoplasmic portion of the chain corresponds to 72–88; the sequence is EAVPKVGKTLRISHDMK. The chain crosses the membrane as a helical span at residues 89 to 109; that stretch reads LFGGEAVNYMIFVNKILYEPI. Topologically, residues 110 to 400 are extracellular; that stretch reads SYYNYTGSCR…GLGTWGFYGT (291 aa). N-linked (GlcNAc...) asparagine; by host glycosylation is found at Asn-113, Asn-135, Asn-153, Asn-186, Asn-207, Asn-223, Asn-311, and Asn-367. A helical transmembrane segment spans residues 401–421; it reads IFGHVLQWIPIIIMVVVVCFV. Topologically, residues 422–427 are cytoplasmic; the sequence is CSWVRK.

This sequence belongs to the reptarenavirus GPC protein family.

It is found in the virion membrane. The protein localises to the host cell membrane. Its function is as follows. mediates virus attachment to host receptor and fusion of viral and host membrane. This chain is Glycoprotein (GPC), found in Alethinophid 1 reptarenavirus (isolate AlRrV1/Boa/USA/BC/2009) (Golden Gate virus).